A 237-amino-acid chain; its full sequence is dTDP-3-amino-3,4,6-trideoxy-alpha-D-glucopyranose N,N-dimethyltransferase (237 aa).

The substrate site is built by Y14 and R17. S-adenosyl-L-methionine-binding positions include Y21, A46, E67, 89–90 (DM), and M105. Substrate-binding positions include 145–147 (TFA), S152, 165–169 (RVSHS), and R229.

This sequence belongs to the methyltransferase TylM1/DesVI family. In terms of assembly, homodimer.

The catalysed reaction is dTDP-3-amino-3,4,6-trideoxy-alpha-D-glucose + 2 S-adenosyl-L-methionine = dTDP-alpha-D-desosamine + 2 S-adenosyl-L-homocysteine + 2 H(+). Its pathway is antibiotic biosynthesis. S-adenosyl-L-methionine-dependent methyltransferase involved in the biosynthesis of desosamine, found in certain macrolide antibiotics such as erthyromycin, azithromycin, clarithromycin, and methymycin. Catalyzes the last step in the biosynthesis of dTDP-desosamine, i.e. the N,N-dimethylation of the 3-amino group of dTDP-3-amino-3,4,6-trideoxy-alpha-D-glucose. This Streptomyces venezuelae protein is dTDP-3-amino-3,4,6-trideoxy-alpha-D-glucopyranose N,N-dimethyltransferase.